The sequence spans 158 residues: 6,7-dimethyl-8-ribityllumazine synthase (158 aa).

5-amino-6-(D-ribitylamino)uracil is bound by residues phenylalanine 23, 61–63 (SFE), and 85–87 (AVI). (2S)-2-hydroxy-3-oxobutyl phosphate is bound at residue 90 to 91 (ET). The active-site Proton donor is histidine 93. Phenylalanine 118 lines the 5-amino-6-(D-ribitylamino)uracil pocket. Residue arginine 132 coordinates (2S)-2-hydroxy-3-oxobutyl phosphate.

Belongs to the DMRL synthase family.

The enzyme catalyses (2S)-2-hydroxy-3-oxobutyl phosphate + 5-amino-6-(D-ribitylamino)uracil = 6,7-dimethyl-8-(1-D-ribityl)lumazine + phosphate + 2 H2O + H(+). It functions in the pathway cofactor biosynthesis; riboflavin biosynthesis; riboflavin from 2-hydroxy-3-oxobutyl phosphate and 5-amino-6-(D-ribitylamino)uracil: step 1/2. In terms of biological role, catalyzes the formation of 6,7-dimethyl-8-ribityllumazine by condensation of 5-amino-6-(D-ribitylamino)uracil with 3,4-dihydroxy-2-butanone 4-phosphate. This is the penultimate step in the biosynthesis of riboflavin. This chain is 6,7-dimethyl-8-ribityllumazine synthase, found in Prochlorococcus marinus (strain MIT 9515).